The chain runs to 445 residues: Methionine aminopeptidase 2 (445 aa).

The disordered stretch occupies residues 1–76; it reads MAAQVASGVG…KKKCTSKVQT (76 aa). Residues 57-71 are compositionally biased toward basic residues; the sequence is AKKKKKKTKKKKKCT. Position 195 (H195) interacts with substrate. A divalent metal cation contacts are provided by D215, D226, and H295. H303 is a substrate binding site. A divalent metal cation-binding residues include E331 and E426.

Belongs to the peptidase M24A family. Methionine aminopeptidase eukaryotic type 2 subfamily. The cofactor is Co(2+). Zn(2+) is required as a cofactor. Mn(2+) serves as cofactor. It depends on Fe(2+) as a cofactor.

Its subcellular location is the cytoplasm. The enzyme catalyses Release of N-terminal amino acids, preferentially methionine, from peptides and arylamides.. Its function is as follows. Cotranslationally removes the N-terminal methionine from nascent proteins. The N-terminal methionine is often cleaved when the second residue in the primary sequence is small and uncharged (Met-Ala-, Cys, Gly, Pro, Ser, Thr, or Val). The chain is Methionine aminopeptidase 2 from Paracoccidioides lutzii (strain ATCC MYA-826 / Pb01) (Paracoccidioides brasiliensis).